A 347-amino-acid chain; its full sequence is E3 ubiquitin-protein ligase ARK2C (347 aa).

2 disordered regions span residues 23–79 and 268–289; these read PFQR…GTLH and PHKY…GEES. Residues 267-269 form a ubiquitin binding region; that stretch reads FPH. The span at 276–285 shows a compositional bias: basic and acidic residues; the sequence is PQDSKGKKDE. Residues Cys295 and Cys298 each coordinate Zn(2+). Residues 295–336 form an RING-type; atypical zinc finger; that stretch reads CTICLSMLEDGEDVRRLPCMHLFHQLCVDQWLAMSKKCPICR. The interval 310–314 is ubiquitin binding; sequence RLPCM. Zn(2+)-binding residues include His318 and Cys321.

The protein belongs to the Arkadia family. Monomer; binding to the ubiquitin-conjugating enzyme E2 does not trigger homodimerization. Expressed in neurons of the nervous system.

Its subcellular location is the nucleus. It carries out the reaction S-ubiquitinyl-[E2 ubiquitin-conjugating enzyme]-L-cysteine + [acceptor protein]-L-lysine = [E2 ubiquitin-conjugating enzyme]-L-cysteine + N(6)-ubiquitinyl-[acceptor protein]-L-lysine.. With respect to regulation, binds free ubiquitin non-covalently via its RING-type zinc finger. Ubiquitin-binding leads to enhance the E3 ubiquitin-protein ligase activity by stabilizing the ubiquitin-conjugating enzyme E2 (donor ubiquitin) in the 'closed' conformation and activating ubiquitin transfer. Its function is as follows. E3 ubiquitin-protein ligase that acts as a regulator of motor axon elongation. Required for efficient motor axon extension in the dorsal forelimb by enhancing the transcriptional responses of the SMAD1/SMAD5/SMAD8 effectors, which are activated downstream of BMP. Acts by mediating ubiquitination and degradation of SMAD inhibitors such as SMAD6, SMAD7, SKI and SNON isoform of SKIL. This Mus musculus (Mouse) protein is E3 ubiquitin-protein ligase ARK2C.